The sequence spans 892 residues: Integrator complex subunit 6 (892 aa).

The 225-residue stretch at 3–227 folds into the VWFA domain; the sequence is ILLFLIDTSA…QCLESLVQKV (225 aa). An Inhibitory loop motif is present at residues 630–637; the sequence is MMIDEADE. 3 disordered regions span residues 665–692, 711–754, and 771–793; these read MSPLLRRPQTPPIITNHVLGKGPTGTQG, VGGT…AAPD, and PDHTQNCEELSPPGQEGEMEVNE.

Belongs to the Integrator subunit 6 family. In terms of assembly, component of the Integrator complex, composed of core subunits INTS1, INTS2, INTS3, INTS4, INTS5, INTS6, INTS7, INTS8, INTS9/RC74, INTS10, INTS11/CPSF3L, INTS12, INTS13, INTS14 and INTS15. The core complex associates with protein phosphatase 2A subunits PPP2CA and PPP2R1A, to form the Integrator-PP2A (INTAC) complex.

It is found in the nucleus. It localises to the chromosome. Component of the integrator complex, a multiprotein complex that terminates RNA polymerase II (Pol II) transcription in the promoter-proximal region of genes. The integrator complex provides a quality checkpoint during transcription elongation by driving premature transcription termination of transcripts that are unfavorably configured for transcriptional elongation: the complex terminates transcription by (1) catalyzing dephosphorylation of the C-terminal domain (CTD) of Pol II subunit POLR2A/RPB1 and SUPT5H/SPT5, (2) degrading the exiting nascent RNA transcript via endonuclease activity and (3) promoting the release of Pol II from bound DNA. The integrator complex is also involved in terminating the synthesis of non-coding Pol II transcripts, such as enhancer RNAs (eRNAs), small nuclear RNAs (snRNAs), telomerase RNAs and long non-coding RNAs (lncRNAs). Within the integrator complex, INTS6 acts as a molecular adapter that promotes assembly of protein phosphatase 2A (PP2A) subunits to the integrator core complex, promoting recruitment of PP2A to transcription pause-release checkpoint. The chain is Integrator complex subunit 6 (ints6l) from Danio rerio (Zebrafish).